The sequence spans 347 residues: Holliday junction branch migration complex subunit RuvB (347 aa).

The interval 4–184 (QDRIVDGHAS…FGIVQRLEFY (181 aa)) is large ATPase domain (RuvB-L). ATP contacts are provided by residues Arg24, Gly65, Lys68, Thr69, Thr70, 131–133 (EDF), Arg174, Tyr184, and Arg221. Thr69 lines the Mg(2+) pocket. Positions 185–255 (SVQDLTHIVK…IADSALNMLN (71 aa)) are small ATPAse domain (RuvB-S). Residues 258 to 347 (HHGFDHMDRR…SQQQDSLPGI (90 aa)) are head domain (RuvB-H). Residues Arg294, Arg313, and Arg318 each coordinate DNA.

This sequence belongs to the RuvB family. Homohexamer. Forms an RuvA(8)-RuvB(12)-Holliday junction (HJ) complex. HJ DNA is sandwiched between 2 RuvA tetramers; dsDNA enters through RuvA and exits via RuvB. An RuvB hexamer assembles on each DNA strand where it exits the tetramer. Each RuvB hexamer is contacted by two RuvA subunits (via domain III) on 2 adjacent RuvB subunits; this complex drives branch migration. In the full resolvosome a probable DNA-RuvA(4)-RuvB(12)-RuvC(2) complex forms which resolves the HJ.

The protein resides in the cytoplasm. The enzyme catalyses ATP + H2O = ADP + phosphate + H(+). The RuvA-RuvB-RuvC complex processes Holliday junction (HJ) DNA during genetic recombination and DNA repair, while the RuvA-RuvB complex plays an important role in the rescue of blocked DNA replication forks via replication fork reversal (RFR). RuvA specifically binds to HJ cruciform DNA, conferring on it an open structure. The RuvB hexamer acts as an ATP-dependent pump, pulling dsDNA into and through the RuvAB complex. RuvB forms 2 homohexamers on either side of HJ DNA bound by 1 or 2 RuvA tetramers; 4 subunits per hexamer contact DNA at a time. Coordinated motions by a converter formed by DNA-disengaged RuvB subunits stimulates ATP hydrolysis and nucleotide exchange. Immobilization of the converter enables RuvB to convert the ATP-contained energy into a lever motion, pulling 2 nucleotides of DNA out of the RuvA tetramer per ATP hydrolyzed, thus driving DNA branch migration. The RuvB motors rotate together with the DNA substrate, which together with the progressing nucleotide cycle form the mechanistic basis for DNA recombination by continuous HJ branch migration. Branch migration allows RuvC to scan DNA until it finds its consensus sequence, where it cleaves and resolves cruciform DNA. The sequence is that of Holliday junction branch migration complex subunit RuvB from Teredinibacter turnerae (strain ATCC 39867 / T7901).